A 167-amino-acid polypeptide reads, in one-letter code: Antibacterial peptide PMAP-37 (167 aa).

An N-terminal signal peptide occupies residues 1–29 (METQRASLCLGRWSLWLLLLALVVPSASA). The propeptide occupies 30–130 (QALSYREAVL…DITCNEIQSV (101 aa)). 2 disulfides stabilise this stretch: Cys-85–Cys-96 and Cys-107–Cys-124.

This sequence belongs to the cathelicidin family.

The protein resides in the secreted. In terms of biological role, exerts antimicrobial activity against both Gram-positive and negative bacteria with minimal inhibitory concentrations ranging over 1-4 micro molar. Its activity appears to be mediated by its ability to damage bacterial membranes. The protein is Antibacterial peptide PMAP-37 (PMAP37) of Sus scrofa (Pig).